The sequence spans 366 residues: Ferredoxin--NADP reductase, leaf isozyme 2, chloroplastic (366 aa).

The transit peptide at 1–48 (MAAVNTVSSLPCSKAGAAVAGGAPRPSTCSVFYPPRCWSKRSSGNGVR) directs the protein to the chloroplast. An FAD-binding FR-type domain is found at 87-209 (KEPYTGRCLL…TGPVGKEMLM (123 aa)). Residues 145–148 (RLYS), 166–168 (CVK), Tyr172, and 183–185 (VCS) contribute to the FAD site. Residues Ser148 and Lys168 each contribute to the NADP(+) site. Residues Cys184 and Cys189 are joined by a disulfide bond. Ser185 is modified (phosphoserine). Thr216 carries the post-translational modification Phosphothreonine. Thr224 lines the FAD pocket. Residues Thr224, 256-257 (VP), 286-287 (SR), Lys296, 325-326 (GL), and Glu364 contribute to the NADP(+) site.

The protein belongs to the ferredoxin--NADP reductase type 1 family. In terms of assembly, heterodimer with LFNR1. Component of high molecular weight thylakoid LFNRs-containing protein complexes containing LIR1, LFNR1, LFNR2, TIC62 and TROL proteins. Interacts directly with LIR1 and TIC62; LIR1 increases the affinity of LFNR1 and LFNR2 for TIC62. The cofactor is FAD. In terms of processing, may form interchain disulfide bonds with LIR1.

The protein resides in the plastid. The protein localises to the chloroplast stroma. It is found in the chloroplast thylakoid membrane. The catalysed reaction is 2 reduced [2Fe-2S]-[ferredoxin] + NADP(+) + H(+) = 2 oxidized [2Fe-2S]-[ferredoxin] + NADPH. Its pathway is energy metabolism; photosynthesis. Plays a key role in regulating the relative amounts of cyclic and non-cyclic electron flow to meet the demands of the plant for ATP and reducing power. In Oryza sativa subsp. japonica (Rice), this protein is Ferredoxin--NADP reductase, leaf isozyme 2, chloroplastic.